Here is a 522-residue protein sequence, read N- to C-terminus: Glutamate--cysteine ligase (522 aa).

This sequence belongs to the glutamate--cysteine ligase type 1 family. Type 1 subfamily.

The enzyme catalyses L-cysteine + L-glutamate + ATP = gamma-L-glutamyl-L-cysteine + ADP + phosphate + H(+). It functions in the pathway sulfur metabolism; glutathione biosynthesis; glutathione from L-cysteine and L-glutamate: step 1/2. The protein is Glutamate--cysteine ligase of Shewanella halifaxensis (strain HAW-EB4).